A 101-amino-acid chain; its full sequence is NADH-quinone oxidoreductase subunit K (101 aa).

3 consecutive transmembrane segments (helical) span residues 4–24 (LGHM…GIFL), 30–50 (IVLL…FVGF), and 62–82 (FVFF…AILV).

The protein belongs to the complex I subunit 4L family. As to quaternary structure, NDH-1 is composed of 14 different subunits. Subunits NuoA, H, J, K, L, M, N constitute the membrane sector of the complex.

It localises to the cell inner membrane. It carries out the reaction a quinone + NADH + 5 H(+)(in) = a quinol + NAD(+) + 4 H(+)(out). Its function is as follows. NDH-1 shuttles electrons from NADH, via FMN and iron-sulfur (Fe-S) centers, to quinones in the respiratory chain. The immediate electron acceptor for the enzyme in this species is believed to be ubiquinone. Couples the redox reaction to proton translocation (for every two electrons transferred, four hydrogen ions are translocated across the cytoplasmic membrane), and thus conserves the redox energy in a proton gradient. The polypeptide is NADH-quinone oxidoreductase subunit K (Stenotrophomonas maltophilia (strain K279a)).